The sequence spans 278 residues: Glutamate racemase (278 aa).

Residues 25–26 (DS) and 57–58 (YG) each bind substrate. C89 serves as the catalytic Proton donor/acceptor. 90-91 (NT) provides a ligand contact to substrate. Residue C204 is the Proton donor/acceptor of the active site. 205–206 (TH) serves as a coordination point for substrate.

It belongs to the aspartate/glutamate racemases family.

It carries out the reaction L-glutamate = D-glutamate. It functions in the pathway cell wall biogenesis; peptidoglycan biosynthesis. Its function is as follows. Provides the (R)-glutamate required for cell wall biosynthesis. The protein is Glutamate racemase of Brucella anthropi (strain ATCC 49188 / DSM 6882 / CCUG 24695 / JCM 21032 / LMG 3331 / NBRC 15819 / NCTC 12168 / Alc 37) (Ochrobactrum anthropi).